Consider the following 734-residue polypeptide: Putative protocadherin beta-18 (734 aa).

5 Cadherin domains span residues 1-79, 80-188, 189-293, 294-398, and 399-508; these read MWKT…TPTF, LNNH…APEF, EKPV…PPEI, AMTS…APIF, and TQTS…SPFV. An N-linked (GlcNAc...) asparagine glycan is attached at Asn-115. N-linked (GlcNAc...) asparagine glycosylation is found at Asn-365 and Asn-383. A glycan (N-linked (GlcNAc...) asparagine) is linked at Asn-514. The Cadherin 6 domain maps to 515–621; the sequence is GSAPCTELVP…GFSQPYLPLT (107 aa). The chain crosses the membrane as a helical span at residues 638-658; sequence VVALASVSSLFLFSVFLFVAV.

It localises to the cell membrane. Its function is as follows. Potential calcium-dependent cell-adhesion protein. This chain is Putative protocadherin beta-18 (PCDHB18P), found in Homo sapiens (Human).